Reading from the N-terminus, the 310-residue chain is Vomeronasal type-1 receptor 40 (310 aa).

Residues 1-20 (MNKANMLRTDKDMQIILFSE) lie on the Extracellular side of the membrane. Residues 21–41 (VSVGISANSILFIAHVCMILG) traverse the membrane as a helical segment. The Cytoplasmic segment spans residues 42–50 (ENRPKPIDL). A helical transmembrane segment spans residues 51-71 (YIAFLSLTQLMLLITMGLIAV). Residues 72–93 (DMFLSQGIWDSTTCQSLIYLHR) lie on the Extracellular side of the membrane. A disulfide bridge connects residues Cys-85 and Cys-172. Residues 94–114 (LLRGLSLCATCLLNILWTITL) form a helical membrane-spanning segment. Residues 115-134 (SSRSFCSTKFKHKSPHHISG) are Cytoplasmic-facing. The helical transmembrane segment at 135–155 (AFIFFCVLYMSFSSHLFISII) threads the bilayer. Residues 156–190 (ATHNLTSENFIYVTQSCSLLPLSYSRTSMFSAPMA) are Extracellular-facing. N-linked (GlcNAc...) asparagine glycosylation is present at Asn-159. The chain crosses the membrane as a helical span at residues 191-211 (IREAFLVSLMALSSGYMVALL). Residues 212–238 (WRHKKQAQHLHSTSLSSKASPEQRATR) are Cytoplasmic-facing. The chain crosses the membrane as a helical span at residues 239 to 259 (TILLLMSFFVVLYILENAVFY). The Extracellular segment spans residues 260–268 (SRIKFKDGS). A helical membrane pass occupies residues 269–289 (ILYCVQIILCHSYATVNPFVF). Topologically, residues 290-310 (ICTEKHIIKFWESKCGRIVNI) are cytoplasmic.

It belongs to the G-protein coupled receptor 1 family.

It is found in the cell membrane. Putative pheromone receptor implicated in the regulation of social and reproductive behavior. The protein is Vomeronasal type-1 receptor 40 (Vmn1r40) of Mus musculus (Mouse).